Here is a 259-residue protein sequence, read N- to C-terminus: Protein unc-50 homolog (259 aa).

The residue at position 1 (Met-1) is an N-acetylmethionine. Over 1-82 (MLPSTSLNSS…TKDQWARDDP (82 aa)) the chain is Cytoplasmic. Position 6 is a phosphoserine (Ser-6). Residues 83–103 (AFLVLLSIWLCVSTIGFGFVL) form a helical membrane-spanning segment. Residues 104–115 (DMGFFETIKLLL) are Lumenal-facing. The chain crosses the membrane as a helical span at residues 116–136 (WVVFIDCVGVGLLISTLMWFI). At 137-163 (SNKYLVKRQSRDYDVEWGYAFDVHLNA) the chain is on the cytoplasmic side. A helical transmembrane segment spans residues 164-184 (FYPLLVILHFIQLFFINHVIL). Topologically, residues 185–187 (TDT) are lumenal. The chain crosses the membrane as a helical span at residues 188–208 (FIGYLVGNTLWLIAVGYYIYV). Residues 209–222 (TFLGYSALPFLKNT) lie on the Cytoplasmic side of the membrane. The helical transmembrane segment at 223–243 (VVLLYPFAPLIVLYGLSLALG) threads the bilayer. The Lumenal segment spans residues 244–259 (WNFTHTLCSFYKYRVK).

This sequence belongs to the unc-50 family. As to expression, expressed in brain, kidney and testis, and at lower levels in heart.

Its subcellular location is the nucleus inner membrane. The protein resides in the golgi apparatus membrane. Functionally, involved in the cell surface expression of neuronal nicotinic receptors. Binds RNA. The sequence is that of Protein unc-50 homolog (Unc50) from Rattus norvegicus (Rat).